The chain runs to 322 residues: Peroxisomal adenine nucleotide carrier 1 (322 aa).

3 Solcar repeats span residues 5–94, 104–184, and 202–298; these read LESV…FKRV, IGTK…LKQH, and LSAF…ITAT. Helical transmembrane passes span 8 to 28, 104 to 124, 158 to 178, 201 to 221, 254 to 274, and 286 to 306; these read VSEA…LYPL, IGTK…SVLI, FDGL…YTVF, VLSA…ATVL, IPGV…FKGL, and ALLL…ILAI.

It belongs to the mitochondrial carrier (TC 2.A.29) family. In terms of tissue distribution, expressed in stamens, pollen grains, seeds, leaves, cotyledons, roots, stems, flowers, hypocotyls and siliques.

Its subcellular location is the peroxisome membrane. In terms of biological role, peroxisomal adenine nucleotide transporter catalyzing the counterexchange of ATP with AMP. ATP is needed by reactions that generate acyl-CoA for peroxisomal fatty acid beta-oxidation during postgerminative growth. Required for the beta-oxidation reactions involved in auxin biosynthesis and for the conversion of seed-reserved triacylglycerols into sucrose that is necessary for growth before the onset of photosynthesis. This Arabidopsis thaliana (Mouse-ear cress) protein is Peroxisomal adenine nucleotide carrier 1 (PNC1).